Consider the following 448-residue polypeptide: Exodeoxyribonuclease 7 large subunit (448 aa).

It belongs to the XseA family. As to quaternary structure, heterooligomer composed of large and small subunits.

The protein resides in the cytoplasm. It catalyses the reaction Exonucleolytic cleavage in either 5'- to 3'- or 3'- to 5'-direction to yield nucleoside 5'-phosphates.. Bidirectionally degrades single-stranded DNA into large acid-insoluble oligonucleotides, which are then degraded further into small acid-soluble oligonucleotides. The chain is Exodeoxyribonuclease 7 large subunit from Bacillus pumilus (strain SAFR-032).